The sequence spans 65 residues: Large ribosomal subunit protein bL35c (65 aa).

The protein belongs to the bacterial ribosomal protein bL35 family.

It localises to the plastid. It is found in the cyanelle. The protein is Large ribosomal subunit protein bL35c (rpl35) of Cyanophora paradoxa.